The sequence spans 266 residues: Ciliary microtubule inner protein 4 (266 aa).

Composition is skewed to polar residues over residues 1-15 (MELS…LTRT) and 24-38 (QDMN…SLDN). Residues 1-124 (MELSHRQGTT…SPEQRTVPLS (124 aa)) are disordered. Low complexity predominate over residues 47–63 (LSQSPLGSSLGQGYLET). The segment covering 81–102 (HPEDLKKGASRSSSRDARETFR) has biased composition (basic and acidic residues).

In terms of tissue distribution, only detected in testis, in the spermatids and sperm within the seminiferous tubules (at protein level).

It is found in the cytoplasmic vesicle. Its subcellular location is the secretory vesicle. The protein localises to the acrosome. It localises to the cell projection. The protein resides in the cilium. It is found in the flagellum. Seems to be associated with spermiogenesis but is not essential for sperm development and male fertility. The sequence is that of Ciliary microtubule inner protein 4 (Cimip4) from Mus musculus (Mouse).